We begin with the raw amino-acid sequence, 249 residues long: 3-deoxy-D-manno-octulosonic acid kinase (249 aa).

The active site involves aspartate 175.

It belongs to the protein kinase superfamily. KdkA/RfaP family.

It is found in the cell inner membrane. The enzyme catalyses an alpha-Kdo-(2-&gt;6)-lipid IVA + ATP = a 4-O-phospho-alpha-Kdo-(2-&gt;6)-lipid IVA + ADP + H(+). Its pathway is bacterial outer membrane biogenesis; LPS core biosynthesis. In terms of biological role, catalyzes the ATP-dependent phosphorylation of the 3-deoxy-D-manno-octulosonic acid (Kdo) residue in Kdo-lipid IV(A) at the 4-OH position. The protein is 3-deoxy-D-manno-octulosonic acid kinase of Xanthomonas oryzae pv. oryzae (strain PXO99A).